The following is a 105-amino-acid chain: Small ribosomal subunit protein bS18 (105 aa).

Residues 1–10 are compositionally biased toward polar residues; sequence MAEETNQQAP. Residues 1-34 are disordered; it reads MAEETNQQAPESGASSSQPTSRPSGPRGGSGGRK. Residues 12–25 show a composition bias toward low complexity; sequence SGASSSQPTSRPSG.

Belongs to the bacterial ribosomal protein bS18 family. In terms of assembly, part of the 30S ribosomal subunit. Forms a tight heterodimer with protein bS6.

In terms of biological role, binds as a heterodimer with protein bS6 to the central domain of the 16S rRNA, where it helps stabilize the platform of the 30S subunit. This chain is Small ribosomal subunit protein bS18, found in Acidobacterium capsulatum (strain ATCC 51196 / DSM 11244 / BCRC 80197 / JCM 7670 / NBRC 15755 / NCIMB 13165 / 161).